An 88-amino-acid chain; its full sequence is Small ribosomal subunit protein uS15 (88 aa).

Belongs to the universal ribosomal protein uS15 family. Part of the 30S ribosomal subunit. Forms a bridge to the 50S subunit in the 70S ribosome, contacting the 23S rRNA.

Functionally, one of the primary rRNA binding proteins, it binds directly to 16S rRNA where it helps nucleate assembly of the platform of the 30S subunit by binding and bridging several RNA helices of the 16S rRNA. Forms an intersubunit bridge (bridge B4) with the 23S rRNA of the 50S subunit in the ribosome. This is Small ribosomal subunit protein uS15 from Leptospira borgpetersenii serovar Hardjo-bovis (strain JB197).